Here is a 127-residue protein sequence, read N- to C-terminus: Glycine cleavage system H protein (127 aa).

The 82-residue stretch at 24–105 (TALVGITDFA…YGEGWMVKMK (82 aa)) folds into the Lipoyl-binding domain. Residue K65 is modified to N6-lipoyllysine.

It belongs to the GcvH family. The glycine cleavage system is composed of four proteins: P, T, L and H. (R)-lipoate is required as a cofactor.

In terms of biological role, the glycine cleavage system catalyzes the degradation of glycine. The H protein shuttles the methylamine group of glycine from the P protein to the T protein. The chain is Glycine cleavage system H protein from Chlorobium phaeovibrioides (strain DSM 265 / 1930) (Prosthecochloris vibrioformis (strain DSM 265)).